A 184-amino-acid polypeptide reads, in one-letter code: Cytidylate kinase (184 aa).

8-16 (GQPGSGKTT) is a binding site for ATP.

It belongs to the cytidylate kinase family. Type 2 subfamily.

The protein localises to the cytoplasm. The enzyme catalyses CMP + ATP = CDP + ADP. It catalyses the reaction dCMP + ATP = dCDP + ADP. This is Cytidylate kinase from Pyrobaculum islandicum (strain DSM 4184 / JCM 9189 / GEO3).